The primary structure comprises 454 residues: MYKNKKTRPAARTVGCLFALGALGLGSAAHAAEAFSPNSKWMLGDWGGKRTELLEKGYDFKLEYVGEAAANLDGGYDDDKTGRYTDQFALGVHMDLEKILGWKATEFQFTVTERNGKNLSNDRIGDPRAGHISSVQEVWGRGQTWRLTQLWLKQQYFDGALDVKFGRFGEGEDFNSFPCDFQNLAFCGSQVGNWAGSIWYNWPVSQWALRVKYNFAPDWYVQVGAYEQNPSNLETGNGFKMSGSGTKGALLPVELIWQPKVGAEQLPGEYRLGYYYSTAKADDVYDDVDGQPQGLTGNDFKSRGSKHGWWVVAQQQVTSHNGDASRGLSLFANLTVHDKATNVVDNYQQLGVVYKGPFDARPKDDIGLGIARIHVNDDVKKRQRLVNQVNGIDDYDNPLYQPLQDTEYNAELYYGVHVTDWLTVRPNLQYIKQPGGVDEVDNALVAGIKIQTVF.

The signal sequence occupies residues 1 to 31 (MYKNKKTRPAARTVGCLFALGALGLGSAAHA).

This sequence belongs to the OprB family.

Its subcellular location is the cell outer membrane. Its function is as follows. Substrate-selective channel for a variety of different sugars. Could potentially facilitate the diffusion of diverse compounds, dependent on the presence of a hydroxyl group, but is presumably restricted to carbohydrates. Involved in the transport of glucose, mannitol, fructose and glycerol (sugars able to support the growth of P.aeruginosa). Facilitates glucose diffusion across the outer membrane. This is Porin B (oprB) from Pseudomonas aeruginosa (strain ATCC 15692 / DSM 22644 / CIP 104116 / JCM 14847 / LMG 12228 / 1C / PRS 101 / PAO1).